A 383-amino-acid polypeptide reads, in one-letter code: tRNA (guanine(26)-N(2))-dimethyltransferase (383 aa).

Residues glutamate 4–leucine 371 form the Trm1 methyltransferase domain. The S-adenosyl-L-methionine site is built by arginine 38, arginine 63, aspartate 80, aspartate 108, and alanine 109. The Zn(2+) site is built by cysteine 243, cysteine 246, cysteine 258, and cysteine 261.

Belongs to the class I-like SAM-binding methyltransferase superfamily. Trm1 family.

The catalysed reaction is guanosine(26) in tRNA + 2 S-adenosyl-L-methionine = N(2)-dimethylguanosine(26) in tRNA + 2 S-adenosyl-L-homocysteine + 2 H(+). Its function is as follows. Dimethylates a single guanine residue at position 26 of a number of tRNAs using S-adenosyl-L-methionine as donor of the methyl groups. The sequence is that of tRNA (guanine(26)-N(2))-dimethyltransferase from Methanopyrus kandleri (strain AV19 / DSM 6324 / JCM 9639 / NBRC 100938).